Consider the following 767-residue polypeptide: DNA topoisomerase 1 (767 aa).

Positions 1–23 (MSGDHLHNDSQIEADFRLNDSHK) are enriched in basic and acidic residues. Positions 1–200 (MSGDHLHNDS…DNKKKKAKKE (200 aa)) are disordered. Ser-2 carries the post-translational modification N-acetylserine. 2 positions are modified to phosphoserine: Ser-2 and Ser-10. Residues 24–39 (HKDKHKDREHRHKEHK) show a composition bias toward basic residues. Residues 40 to 110 (KDKDKDREKS…DAKIKKEKEN (71 aa)) are compositionally biased toward basic and acidic residues. Residue Ser-59 is modified to Phosphoserine. Residue Lys-103 forms a Glycyl lysine isopeptide (Lys-Gly) (interchain with G-Cter in SUMO2) linkage. Lys-105 participates in a covalent cross-link: Glycyl lysine isopeptide (Lys-Gly) (interchain with G-Cter in SUMO); alternate. Residue Lys-105 forms a Glycyl lysine isopeptide (Lys-Gly) (interchain with G-Cter in SUMO2); alternate linkage. At Ser-114 the chain carries Phosphoserine. Residue Lys-119 forms a Glycyl lysine isopeptide (Lys-Gly) (interchain with G-Cter in SUMO); alternate linkage. Lys-119 is covalently cross-linked (Glycyl lysine isopeptide (Lys-Gly) (interchain with G-Cter in SUMO2); alternate). A Glycyl lysine isopeptide (Lys-Gly) (interchain with G-Cter in SUMO1); alternate cross-link involves residue Lys-119. Residues 131-168 (PKEDIKPLKRPRDEDDADYKPKKIKTEDIKKEKKRKLE) are compositionally biased toward basic and acidic residues. Glycyl lysine isopeptide (Lys-Gly) (interchain with G-Cter in SUMO2) cross-links involve residues Lys-136 and Lys-150. Lys-155 participates in a covalent cross-link: Glycyl lysine isopeptide (Lys-Gly) (interchain with G-Cter in SUMO); alternate. Residue Lys-155 forms a Glycyl lysine isopeptide (Lys-Gly) (interchain with G-Cter in SUMO2); alternate linkage. Glycyl lysine isopeptide (Lys-Gly) (interchain with G-Cter in SUMO2) cross-links involve residues Lys-160 and Lys-166. Lys-174 is covalently cross-linked (Glycyl lysine isopeptide (Lys-Gly) (interchain with G-Cter in SUMO2); alternate). Lys-174 is modified (N6-acetyllysine; alternate). A compositionally biased stretch (basic and acidic residues) spans 181-200 (KDKDKKVAEPDNKKKKAKKE). A Glycyl lysine isopeptide (Lys-Gly) (interchain with G-Cter in SUMO2) cross-link involves residue Lys-206. Lys-282 carries the N6-acetyllysine modification. Lys-338 participates in a covalent cross-link: Glycyl lysine isopeptide (Lys-Gly) (interchain with G-Cter in SUMO2). 2 interaction with DNA regions span residues 427-428 (KY) and 490-495 (RAGNEK). The Topo IB-type catalytic domain maps to 434 to 767 (SSRIKGEKDW…IDMTDEDYEF (334 aa)). Position 508 is a phosphoserine; by CK2 (Ser-508). Residue Lys-551 forms a Glycyl lysine isopeptide (Lys-Gly) (interchain with G-Cter in SUMO2) linkage. The interaction with DNA stretch occupies residues 587 to 589 (TAK). Glycyl lysine isopeptide (Lys-Gly) (interchain with G-Cter in SUMO2) cross-links involve residues Lys-644, Lys-702, and Lys-714. Tyr-725 (O-(3'-phospho-DNA)-tyrosine intermediate) is an active-site residue.

It belongs to the type IB topoisomerase family. As to quaternary structure, monomer. Interacts with ERCC6. Interacts with TPRN; TPRN interacts with a number of DNA damage response proteins, is recruited to sites of DNA damage and may play a role in DNA damage repair. In terms of processing, sumoylated. Lys-119 is the main site of sumoylation. Sumoylation plays a role in partitioning TOP1 between nucleoli and nucleoplasm. Levels are dramatically increased on camptothecin (CPT) treatment. Post-translationally, phosphorylation at Ser-508 by CK2 increases binding to supercoiled DNA and sensitivity to camptothecin.

It is found in the nucleus. The protein localises to the nucleolus. The protein resides in the nucleoplasm. The enzyme catalyses ATP-independent breakage of single-stranded DNA, followed by passage and rejoining.. Functionally, releases the supercoiling and torsional tension of DNA introduced during the DNA replication and transcription by transiently cleaving and rejoining one strand of the DNA duplex. Introduces a single-strand break via transesterification at a target site in duplex DNA. The scissile phosphodiester is attacked by the catalytic tyrosine of the enzyme, resulting in the formation of a DNA-(3'-phosphotyrosyl)-enzyme intermediate and the expulsion of a 5'-OH DNA strand. The free DNA strand then rotates around the intact phosphodiester bond on the opposing strand, thus removing DNA supercoils. Finally, in the religation step, the DNA 5'-OH attacks the covalent intermediate to expel the active-site tyrosine and restore the DNA phosphodiester backbone. Regulates the alternative splicing of tissue factor (F3) pre-mRNA in endothelial cells. Involved in the circadian transcription of the core circadian clock component BMAL1 by altering the chromatin structure around the ROR response elements (ROREs) on the BMAL1 promoter. This is DNA topoisomerase 1 (Top1) from Rattus norvegicus (Rat).